The sequence spans 237 residues: Sugar fermentation stimulation protein homolog (237 aa).

Belongs to the SfsA family.

This is Sugar fermentation stimulation protein homolog from Pseudomonas putida (strain GB-1).